The primary structure comprises 492 residues: Catalase isozyme 2 (492 aa).

Residues histidine 65 and asparagine 138 contribute to the active site. Heme is bound at residue tyrosine 348.

The protein belongs to the catalase family. As to quaternary structure, homotetramer. Heme is required as a cofactor.

The protein localises to the peroxisome. The catalysed reaction is 2 H2O2 = O2 + 2 H2O. Occurs in almost all aerobically respiring organisms and serves to protect cells from the toxic effects of hydrogen peroxide. In Gossypium hirsutum (Upland cotton), this protein is Catalase isozyme 2 (CAT2).